We begin with the raw amino-acid sequence, 230 residues long: Uracil-DNA glycosylase (230 aa).

Residue Asp70 is the Proton acceptor of the active site.

Belongs to the uracil-DNA glycosylase (UDG) superfamily. UNG family.

The protein resides in the cytoplasm. It catalyses the reaction Hydrolyzes single-stranded DNA or mismatched double-stranded DNA and polynucleotides, releasing free uracil.. Functionally, excises uracil residues from the DNA which can arise as a result of misincorporation of dUMP residues by DNA polymerase or due to deamination of cytosine. This chain is Uracil-DNA glycosylase, found in Pseudomonas putida (strain GB-1).